Here is a 289-residue protein sequence, read N- to C-terminus: Protoheme IX farnesyltransferase (289 aa).

9 helical membrane passes run 9-29, 40-60, 89-109, 110-130, 134-154, 155-175, 190-209, 228-248, and 269-289; these read VALM…PVMM, LIAV…TINC, LTFG…LVNW, PSAL…TLGL, TPSN…IGWS, AVTG…FFWT, YAAA…VVTR, VAST…WFLV, and FHMS…TALV.

It belongs to the UbiA prenyltransferase family. Protoheme IX farnesyltransferase subfamily.

It localises to the cell membrane. The catalysed reaction is heme b + (2E,6E)-farnesyl diphosphate + H2O = Fe(II)-heme o + diphosphate. The protein operates within porphyrin-containing compound metabolism; heme O biosynthesis; heme O from protoheme: step 1/1. In terms of biological role, converts heme B (protoheme IX) to heme O by substitution of the vinyl group on carbon 2 of heme B porphyrin ring with a hydroxyethyl farnesyl side group. The chain is Protoheme IX farnesyltransferase from Frankia casuarinae (strain DSM 45818 / CECT 9043 / HFP020203 / CcI3).